Reading from the N-terminus, the 371-residue chain is Putative glutamate--cysteine ligase 2 (371 aa).

It belongs to the glutamate--cysteine ligase type 2 family. YbdK subfamily.

The catalysed reaction is L-cysteine + L-glutamate + ATP = gamma-L-glutamyl-L-cysteine + ADP + phosphate + H(+). Functionally, ATP-dependent carboxylate-amine ligase which exhibits weak glutamate--cysteine ligase activity. This Burkholderia mallei (strain NCTC 10247) protein is Putative glutamate--cysteine ligase 2.